We begin with the raw amino-acid sequence, 536 residues long: Chaperonin GroEL 2 (536 aa).

ATP contacts are provided by residues 29–32 (TLGP), 86–90 (DGTTT), Gly412, and Asp495.

This sequence belongs to the chaperonin (HSP60) family. As to quaternary structure, forms a cylinder of 14 subunits composed of two heptameric rings stacked back-to-back. Interacts with the co-chaperonin GroES.

It is found in the cytoplasm. It carries out the reaction ATP + H2O + a folded polypeptide = ADP + phosphate + an unfolded polypeptide.. In terms of biological role, together with its co-chaperonin GroES, plays an essential role in assisting protein folding. The GroEL-GroES system forms a nano-cage that allows encapsulation of the non-native substrate proteins and provides a physical environment optimized to promote and accelerate protein folding. This chain is Chaperonin GroEL 2, found in Arthrobacter sp. (strain FB24).